The sequence spans 27 residues: Conotoxin Lo6/7b (27 aa).

Intrachain disulfides connect C2/C16, C9/C19, and C15/C26. Y27 carries the tyrosine amide modification.

Expressed by the venom duct.

It localises to the secreted. Functionally, 1 uM of this toxin does not show any effect on voltage-gated sodium and potassium channels. Does not show antibacterial activity on both Gram-negative and Gram-positive bacteria. In Conasprella longurionis (Cone snail), this protein is Conotoxin Lo6/7b.